Here is a 318-residue protein sequence, read N- to C-terminus: Ubiquitin-conjugating enzyme E2 J1 (318 aa).

Residues 1-282 lie on the Cytoplasmic side of the membrane; it reads METRYNLKSP…QGQPPRAHHT (282 aa). Residues 10–168 enclose the UBC core domain; it reads PAVKRLMKEA…VLLPLKSGSG (159 aa). Cysteine 91 acts as the Glycyl thioester intermediate in catalysis. Serine 184 is subject to Phosphoserine. Residues 215–233 show a composition bias toward polar residues; the sequence is PTTFQGATASTSYGAQNPS. Residues 215 to 283 are disordered; it reads PTTFQGATAS…GQPPRAHHTE (69 aa). A compositionally biased stretch (low complexity) spans 249–269; it reads SMSPRQRRAQQQSQRRPSTSP. Phosphoserine is present on residues serine 266 and serine 268. The helical; Anchor for type IV membrane protein transmembrane segment at 283-303 threads the bilayer; sequence EHGGSAMLIIILTLALAALIF. At 304-318 the chain is on the lumenal side; the sequence is RRIYLANEYIFDFEL.

The protein belongs to the ubiquitin-conjugating enzyme family. As to quaternary structure, component of the HRD1 complex, which comprises at least SYNV1/HRD1, DERL1/2, FAM8A1, HERPUD1/HERP, OS9, SEL1L and UBE2J1. Interacts with E3 ligase RNF26. Interacts with E3 ligase RNF133. Post-translationally, phosphorylated at Ser-184 in a cytosolic stress-dependent manner by MAP kinase p38 MAPKAPK2. In terms of processing, phosphorylated UBE2J1 is rapidly ubiquitinated and subsequently degraded by the proteasome.

Its subcellular location is the endoplasmic reticulum membrane. The catalysed reaction is S-ubiquitinyl-[E1 ubiquitin-activating enzyme]-L-cysteine + [E2 ubiquitin-conjugating enzyme]-L-cysteine = [E1 ubiquitin-activating enzyme]-L-cysteine + S-ubiquitinyl-[E2 ubiquitin-conjugating enzyme]-L-cysteine.. It functions in the pathway protein modification; protein ubiquitination. In terms of biological role, catalyzes the covalent attachment of ubiquitin to other proteins. Functions in the selective degradation of misfolded membrane proteins from the endoplasmic reticulum (ERAD) and is essential for cells to recover from ER stress. Plays a role in MAPKAPK2-dependent translational control of TNF-alpha synthesis. Also acts as a platform for perinuclear positioning of the endosomal system by mediating ubiquitination of SQSTM1 through interaction with the E3 ubiquitin-protein ligase RNF26. Plays a role in male fecundity through the interaction with the E3 ubiquitin-protein ligase RNF133. This Mus musculus (Mouse) protein is Ubiquitin-conjugating enzyme E2 J1 (Ube2j1).